The chain runs to 285 residues: Probable endonuclease 4 (285 aa).

Zn(2+)-binding residues include H69, H109, E145, D179, H182, H216, D229, H231, and E261.

It belongs to the AP endonuclease 2 family. Zn(2+) serves as cofactor.

It carries out the reaction Endonucleolytic cleavage to 5'-phosphooligonucleotide end-products.. Endonuclease IV plays a role in DNA repair. It cleaves phosphodiester bonds at apurinic or apyrimidinic (AP) sites, generating a 3'-hydroxyl group and a 5'-terminal sugar phosphate. This Escherichia coli (strain SMS-3-5 / SECEC) protein is Probable endonuclease 4.